A 193-amino-acid polypeptide reads, in one-letter code: MDSRALPRPAPPAPGVPGCCAARRRPESPELLRCSRRRRPGAVDPGSGAAAVARRNERERNRVKLVNLGFQALRQHVPHGGASKKLSKVETLRSAVEYIRALQRLLAEHDAVRAALAGGLLAPAVRHPLPRAPSGTPATAASPSCASSSPGRGHSSEPGSPRSAYSSDDSGCEGALSPAERELLDFSSWLGGY.

2 disordered regions span residues methionine 1–arginine 58 and proline 128–serine 177. The bHLH domain maps to alanine 50–leucine 102. A compositionally biased stretch (low complexity) spans proline 128 to arginine 152.

As to quaternary structure, efficient DNA binding requires dimerization with another basic helix-loop-helix (bHLH) protein. Forms heterodimers with bHLH transcription factor TCF3. May not heterodimerise with bHLH protein HAND1. Expressed in placenta.

It is found in the nucleus. In terms of biological role, transcription factor. Binds to E-box motifs 5'-CANNTG-3' in the regulatory elements of target genes, probably as a heterodimer with another basic helix-loop-helix (bHLH) protein such as the transcription factor TCF3. May bind both open and closed chromatin, acting as a pioneer transcription factor to allow other factors to bind and activate lineage-specific genes. Required during post-implantation development for the generation of some differentiated trophoblast cell types. Transcriptional activity of ASCL2 may be antagonised in a subset of trophoblast cells by bHLH transcription factor HAND1, perhaps by competing for dimerization with other bHLH proteins. Involved in differentiation and function of follicular T-helper (Tfh) cells, thereby playing a role in germinal center responses; probably modulates expression of genes involved in Tfh cell function, such as BCL6. May also act as a suppressor of Th1-, Th2- and Th17-cell differentiation. Induces the formation of stem cells in intestinal crypts in vitro, synergistically activating transcription of target genes, such as SOX9, together with TCF4/beta-catenin. May form a bistable transcriptional switch, controlling expression of its own gene together with Wnt/R-spondin signaling, and thereby maintaining stem cell characteristics. Modulates expression of target genes, including perhaps down-regulating EGR1/Krox24 and chemokine CXCL10/Mob-1 and up-regulating CXCR4 and CDKN1C/p57kip2, in Schwann cells. May play a role in reducing proliferation of Schwann cells, perhaps acting via modulation of expression of CDKN1C. May be dispensable for blastocyst formation and later embryonic function. May be involved in the determination of neuronal precursors. This is Achaete-scute homolog 2 (ASCL2) from Bos taurus (Bovine).